Reading from the N-terminus, the 144-residue chain is Nucleoside diphosphate kinase (144 aa).

ATP-binding residues include K5, F53, R81, T87, R98, and N108. The active-site Pros-phosphohistidine intermediate is H111.

This sequence belongs to the NDK family. Requires Mg(2+) as cofactor.

The catalysed reaction is a 2'-deoxyribonucleoside 5'-diphosphate + ATP = a 2'-deoxyribonucleoside 5'-triphosphate + ADP. The enzyme catalyses a ribonucleoside 5'-diphosphate + ATP = a ribonucleoside 5'-triphosphate + ADP. Functionally, major role in the synthesis of nucleoside triphosphates other than ATP. The ATP gamma phosphate is transferred to the NDP beta phosphate via a ping-pong mechanism, using a phosphorylated active-site intermediate. This chain is Nucleoside diphosphate kinase, found in Solanum lycopersicum (Tomato).